The primary structure comprises 332 residues: 2,3-diketo-L-gulonate reductase (332 aa).

His-44 (proton donor) is an active-site residue. NAD(+)-binding positions include 168-174 (ITMVDMS), 224-225 (WK), and 304-306 (GHE).

The protein belongs to the LDH2/MDH2 oxidoreductase family. DlgD subfamily. In terms of assembly, homodimer.

The protein resides in the cytoplasm. It carries out the reaction 3-dehydro-L-gulonate + NAD(+) = 2,3-dioxo-L-gulonate + NADH + H(+). The enzyme catalyses 3-dehydro-L-gulonate + NADP(+) = 2,3-dioxo-L-gulonate + NADPH + H(+). Catalyzes the reduction of 2,3-diketo-L-gulonate in the presence of NADH, to form 3-keto-L-gulonate. The sequence is that of 2,3-diketo-L-gulonate reductase from Salmonella agona (strain SL483).